The primary structure comprises 562 residues: Sulfite reductase [NADPH] hemoprotein beta-component (562 aa).

The [4Fe-4S] cluster site is built by cysteine 428, cysteine 434, cysteine 473, and cysteine 477. Residue cysteine 477 coordinates siroheme.

This sequence belongs to the nitrite and sulfite reductase 4Fe-4S domain family. In terms of assembly, alpha(8)-beta(8). The alpha component is a flavoprotein, the beta component is a hemoprotein. Siroheme is required as a cofactor. Requires [4Fe-4S] cluster as cofactor.

The enzyme catalyses hydrogen sulfide + 3 NADP(+) + 3 H2O = sulfite + 3 NADPH + 4 H(+). It participates in sulfur metabolism; hydrogen sulfide biosynthesis; hydrogen sulfide from sulfite (NADPH route): step 1/1. Functionally, component of the sulfite reductase complex that catalyzes the 6-electron reduction of sulfite to sulfide. This is one of several activities required for the biosynthesis of L-cysteine from sulfate. The polypeptide is Sulfite reductase [NADPH] hemoprotein beta-component (Myxococcus xanthus (strain DK1622)).